The sequence spans 407 residues: Methylthioribose kinase (407 aa).

ATP contacts are provided by residues asparagine 40, lysine 57, and 111-113; that span reads EDL. Aspartate 229 lines the substrate pocket. 246-248 lines the ATP pocket; that stretch reads DAE. Residue arginine 344 participates in substrate binding.

The protein belongs to the methylthioribose kinase family. As to quaternary structure, homodimer.

It carries out the reaction 5-(methylsulfanyl)-D-ribose + ATP = 5-(methylsulfanyl)-alpha-D-ribose 1-phosphate + ADP + H(+). Its pathway is amino-acid biosynthesis; L-methionine biosynthesis via salvage pathway; S-methyl-5-thio-alpha-D-ribose 1-phosphate from S-methyl-5'-thioadenosine (hydrolase route): step 2/2. In terms of biological role, catalyzes the phosphorylation of methylthioribose into methylthioribose-1-phosphate. The polypeptide is Methylthioribose kinase (Yersinia pseudotuberculosis serotype IB (strain PB1/+)).